We begin with the raw amino-acid sequence, 177 residues long: Inorganic pyrophosphatase (177 aa).

Substrate-binding residues include lysine 31, arginine 45, and tyrosine 57. Residues aspartate 67, aspartate 72, and aspartate 104 each coordinate Mg(2+). Tyrosine 141 is a binding site for substrate.

Belongs to the PPase family. Homohexamer. Also forms homotrimers, but the trimeric form is 23% less active than the hexamer. In fact, likely forms a dimer of trimers. Mg(2+) is required as a cofactor.

It is found in the cytoplasm. It catalyses the reaction diphosphate + H2O = 2 phosphate + H(+). Its activity is regulated as follows. Inhibited by sodium fluoride (NaF) in vitro, similarly to other class A type inorganic pyrophosphatases. Its function is as follows. Catalyzes the hydrolysis of inorganic pyrophosphate (PPi) forming two phosphate ions. The hydrolysis of PPi by inorganic pyrophosphatase releases a considerable amount of energy that can drive unfavorable biochemical transformations to completion. Is not active on nucleoside triphosphates (ATP, TTP, GTP, or CTP) or nucleoside diphosphate (ADP). The polypeptide is Inorganic pyrophosphatase (Haloferax volcanii (strain ATCC 29605 / DSM 3757 / JCM 8879 / NBRC 14742 / NCIMB 2012 / VKM B-1768 / DS2) (Halobacterium volcanii)).